The sequence spans 565 residues: Laccase-12 (565 aa).

A signal peptide spans 1-24; sequence MTTVHTFSILLFFCSLFSASLIIA. 2 consecutive Plastocyanin-like domains span residues 32–148 and 158–310; these read VIQE…PTPG and RQTA…YKKT. A glycan (N-linked (GlcNAc...) asparagine) is linked at Asn-78. The Cu cation site is built by His-82, His-84, His-127, and His-129. Residues Asn-187, Asn-203, Asn-298, Asn-325, Asn-377, Asn-387, Asn-395, and Asn-428 are each glycosylated (N-linked (GlcNAc...) asparagine). The region spanning 413–549 is the Plastocyanin-like 3 domain; it reads DFPSKPPVKF…AMAFLVDNGV (137 aa). The Cu cation site is built by His-466, His-469, His-471, His-528, Cys-529, His-530, and His-534.

The protein belongs to the multicopper oxidase family. Requires Cu cation as cofactor. In terms of tissue distribution, predominantly expressed in the inflorescence stem.

Its subcellular location is the secreted. The protein resides in the extracellular space. It localises to the apoplast. The enzyme catalyses 4 hydroquinone + O2 = 4 benzosemiquinone + 2 H2O. In terms of biological role, lignin degradation and detoxification of lignin-derived products. The protein is Laccase-12 (LAC12) of Arabidopsis thaliana (Mouse-ear cress).